The primary structure comprises 1070 residues: Carbamoyl phosphate synthase large chain (1070 aa).

The segment at 1 to 401 is carboxyphosphate synthetic domain; that stretch reads MPKRDDIKTI…ALLKAVRSLE (401 aa). Residues R129, R169, G175, G176, K208, I210, E215, G241, I242, H243, Q284, and E298 each contribute to the ATP site. One can recognise an ATP-grasp 1 domain in the interval 133–327; the sequence is RDLMNELGEP…IAKLAAKIAV (195 aa). Q284, E298, and N300 together coordinate Mg(2+). Residues Q284, E298, and N300 each contribute to the Mn(2+) site. Positions 402 to 546 are oligomerization domain; sequence IGADHLLLEE…YSTYEEENES (145 aa). Residues 547-929 are carbamoyl phosphate synthetic domain; it reads TRSAKESVIV…ALYKGFVASG (383 aa). The ATP-grasp 2 domain maps to 671–861; it reads EKALEILQIP…MANVATRVIL (191 aa). Residues R707, R746, V748, E752, G777, V778, H779, S780, Q820, and E832 each coordinate ATP. Mg(2+) contacts are provided by Q820, E832, and N834. Mn(2+)-binding residues include Q820, E832, and N834. An MGS-like domain is found at 930 to 1070; sequence TTMHDYGTVL…SEVKQPKARV (141 aa). Residues 930-1070 form an allosteric domain region; the sequence is TTMHDYGTVL…SEVKQPKARV (141 aa).

This sequence belongs to the CarB family. Composed of two chains; the small (or glutamine) chain promotes the hydrolysis of glutamine to ammonia, which is used by the large (or ammonia) chain to synthesize carbamoyl phosphate. Tetramer of heterodimers (alpha,beta)4. Mg(2+) is required as a cofactor. It depends on Mn(2+) as a cofactor.

The catalysed reaction is hydrogencarbonate + L-glutamine + 2 ATP + H2O = carbamoyl phosphate + L-glutamate + 2 ADP + phosphate + 2 H(+). It carries out the reaction hydrogencarbonate + NH4(+) + 2 ATP = carbamoyl phosphate + 2 ADP + phosphate + 2 H(+). It participates in amino-acid biosynthesis; L-arginine biosynthesis; carbamoyl phosphate from bicarbonate: step 1/1. The protein operates within pyrimidine metabolism; UMP biosynthesis via de novo pathway; (S)-dihydroorotate from bicarbonate: step 1/3. Its function is as follows. Large subunit of the glutamine-dependent carbamoyl phosphate synthetase (CPSase). CPSase catalyzes the formation of carbamoyl phosphate from the ammonia moiety of glutamine, carbonate, and phosphate donated by ATP, constituting the first step of 2 biosynthetic pathways, one leading to arginine and/or urea and the other to pyrimidine nucleotides. The large subunit (synthetase) binds the substrates ammonia (free or transferred from glutamine from the small subunit), hydrogencarbonate and ATP and carries out an ATP-coupled ligase reaction, activating hydrogencarbonate by forming carboxy phosphate which reacts with ammonia to form carbamoyl phosphate. This is Carbamoyl phosphate synthase large chain from Listeria monocytogenes serotype 4a (strain HCC23).